The primary structure comprises 750 residues: Methylmalonyl-CoA mutase, mitochondrial (750 aa).

The N-terminal 32 residues, 1–32, are a transit peptide targeting the mitochondrion; that stretch reads MLRAKNQLFLLSPHYLRQVKESSGSRLIQQRL. A malonyl-CoA-binding site is contributed by Gln-50. Lys-89 is modified (N6-acetyllysine). Malonyl-CoA contacts are provided by residues 96-99 and 106-110; these read YPTM and TIRQY. Position 212 is an N6-acetyllysine (Lys-212). Malonyl-CoA-binding positions include 216–218, Arg-228, Lys-255, His-265, and 304–306; these read TIQ and RLS. Lys-335 carries the N6-acetyllysine modification. Residue Lys-343 is modified to N6-succinyllysine. Ser-481 is modified (phosphoserine). Position 595 is an N6-succinyllysine (Lys-595). An N6-acetyllysine modification is found at Lys-602. Positions 614–746 constitute a B12-binding domain; that stretch reads RPRLLVAKMG…DDIEKCLEKK (133 aa). His-627 serves as a coordination point for adenosylcob(III)alamin.

This sequence belongs to the methylmalonyl-CoA mutase family. As to quaternary structure, homodimer. Interacts (the apoenzyme form) with MMAA; the interaction is GTP dependent. Adenosylcob(III)alamin is required as a cofactor.

The protein resides in the mitochondrion matrix. The protein localises to the mitochondrion. Its subcellular location is the cytoplasm. The enzyme catalyses (R)-methylmalonyl-CoA = succinyl-CoA. During catalysis, accumulation of oxidized inactive cofactor hydroxocobalamin (OH2Cbl) leads to loss of MMUT activity. Interaction with MMAA decreases the rate of OH2Cbl formation and promotes the replacement of OH2Cbl by the active cofactor adenosylcobalamin (AdoCbl), thereby restoring MMUT activity. Inhibited by itaconyl-CoA, a metabolite that inactivates the coenzyme B12 cofactor. Inhibited at high concentration of substrate. Functionally, catalyzes the reversible isomerization of methylmalonyl-CoA (MMCoA) (generated from branched-chain amino acid metabolism and degradation of dietary odd chain fatty acids and cholesterol) to succinyl-CoA (3-carboxypropionyl-CoA), a key intermediate of the tricarboxylic acid cycle. The polypeptide is Methylmalonyl-CoA mutase, mitochondrial (Homo sapiens (Human)).